The chain runs to 285 residues: Bifunctional protein FolD (285 aa).

Residues 166–168 and Ile-232 contribute to the NADP(+) site; that span reads GAS.

Belongs to the tetrahydrofolate dehydrogenase/cyclohydrolase family. In terms of assembly, homodimer.

The catalysed reaction is (6R)-5,10-methylene-5,6,7,8-tetrahydrofolate + NADP(+) = (6R)-5,10-methenyltetrahydrofolate + NADPH. It carries out the reaction (6R)-5,10-methenyltetrahydrofolate + H2O = (6R)-10-formyltetrahydrofolate + H(+). It participates in one-carbon metabolism; tetrahydrofolate interconversion. Catalyzes the oxidation of 5,10-methylenetetrahydrofolate to 5,10-methenyltetrahydrofolate and then the hydrolysis of 5,10-methenyltetrahydrofolate to 10-formyltetrahydrofolate. This is Bifunctional protein FolD from Pseudoalteromonas atlantica (strain T6c / ATCC BAA-1087).